The primary structure comprises 237 residues: Ribosomal RNA small subunit methyltransferase G (237 aa).

Positions 1 to 25 are disordered; sequence MASRHSPQTAAQPDAADKAQALRLT. The span at 7–21 shows a compositional bias: low complexity; sequence PQTAAQPDAADKAQA. Residues G85, F90, and R155 each coordinate S-adenosyl-L-methionine.

This sequence belongs to the methyltransferase superfamily. RNA methyltransferase RsmG family.

Its subcellular location is the cytoplasm. The catalysed reaction is guanosine(527) in 16S rRNA + S-adenosyl-L-methionine = N(7)-methylguanosine(527) in 16S rRNA + S-adenosyl-L-homocysteine. In terms of biological role, specifically methylates the N7 position of guanine in position 527 of 16S rRNA. The sequence is that of Ribosomal RNA small subunit methyltransferase G from Rhodopseudomonas palustris (strain HaA2).